Reading from the N-terminus, the 301-residue chain is GTP cyclohydrolase FolE2 (301 aa).

Belongs to the GTP cyclohydrolase IV family.

It carries out the reaction GTP + H2O = 7,8-dihydroneopterin 3'-triphosphate + formate + H(+). It participates in cofactor biosynthesis; 7,8-dihydroneopterin triphosphate biosynthesis; 7,8-dihydroneopterin triphosphate from GTP: step 1/1. In terms of biological role, converts GTP to 7,8-dihydroneopterin triphosphate. The polypeptide is GTP cyclohydrolase FolE2 (Pseudomonas putida (strain GB-1)).